The following is a 139-amino-acid chain: S-adenosylmethionine decarboxylase proenzyme (139 aa).

S63 functions as the Schiff-base intermediate with substrate; via pyruvic acid in the catalytic mechanism. Pyruvic acid (Ser); by autocatalysis is present on S63. Catalysis depends on H68, which acts as the Proton acceptor; for processing activity. C83 serves as the catalytic Proton donor; for catalytic activity.

It belongs to the prokaryotic AdoMetDC family. Type 1 subfamily. As to quaternary structure, heterotetramer of two alpha and two beta chains arranged as a dimer of alpha/beta heterodimers. Pyruvate serves as cofactor. Is synthesized initially as an inactive proenzyme. Formation of the active enzyme involves a self-maturation process in which the active site pyruvoyl group is generated from an internal serine residue via an autocatalytic post-translational modification. Two non-identical subunits are generated from the proenzyme in this reaction, and the pyruvate is formed at the N-terminus of the alpha chain, which is derived from the carboxyl end of the proenzyme. The post-translation cleavage follows an unusual pathway, termed non-hydrolytic serinolysis, in which the side chain hydroxyl group of the serine supplies its oxygen atom to form the C-terminus of the beta chain, while the remainder of the serine residue undergoes an oxidative deamination to produce ammonia and the pyruvoyl group blocking the N-terminus of the alpha chain.

The catalysed reaction is S-adenosyl-L-methionine + H(+) = S-adenosyl 3-(methylsulfanyl)propylamine + CO2. It participates in amine and polyamine biosynthesis; S-adenosylmethioninamine biosynthesis; S-adenosylmethioninamine from S-adenosyl-L-methionine: step 1/1. Its function is as follows. Catalyzes the decarboxylation of S-adenosylmethionine to S-adenosylmethioninamine (dcAdoMet), the propylamine donor required for the synthesis of the polyamines spermine and spermidine from the diamine putrescine. This Pyrococcus furiosus (strain ATCC 43587 / DSM 3638 / JCM 8422 / Vc1) protein is S-adenosylmethionine decarboxylase proenzyme.